Here is a 226-residue protein sequence, read N- to C-terminus: Prolactin (226 aa).

The first 29 residues, 1–29 (MNSQGSAQKAGTLLLLLISNLLFCQNVQP), serve as a signal peptide directing secretion. Cys-33 and Cys-38 are joined by a disulfide. Residues Ser-53 and Ser-117 each carry the phosphoserine modification. Disulfide bonds link Cys-85-Cys-201 and Cys-218-Cys-226.

This sequence belongs to the somatotropin/prolactin family. Interacts with PRLR.

It is found in the secreted. In terms of biological role, prolactin acts primarily on the mammary gland by promoting lactation. The polypeptide is Prolactin (Prl) (Mus musculus (Mouse)).